A 657-amino-acid chain; its full sequence is Threonine--tRNA ligase (657 aa).

The TGS domain occupies 1–61; the sequence is MINVTLPDGS…EGDASVAIIT (61 aa). The interval 244 to 549 is catalytic; it reads DHRKLGAQLD…LIENYAGSFP (306 aa). 3 residues coordinate Zn(2+): Cys349, His400, and His526.

Belongs to the class-II aminoacyl-tRNA synthetase family. As to quaternary structure, homodimer. It depends on Zn(2+) as a cofactor.

It is found in the cytoplasm. It carries out the reaction tRNA(Thr) + L-threonine + ATP = L-threonyl-tRNA(Thr) + AMP + diphosphate + H(+). Functionally, catalyzes the attachment of threonine to tRNA(Thr) in a two-step reaction: L-threonine is first activated by ATP to form Thr-AMP and then transferred to the acceptor end of tRNA(Thr). Also edits incorrectly charged L-seryl-tRNA(Thr). The chain is Threonine--tRNA ligase from Hyphomonas neptunium (strain ATCC 15444).